Reading from the N-terminus, the 122-residue chain is MIQSFTRLAVADNSGAKELMCIKVLGGSKRRYATVGDVIVASVKKALPNGKVKKGQVVKAVIVRTKKEIHRDNGSLIRFDENAAVILDNKREPIGTRIFGPVGREVRYGGFMKIVSLAPEVL.

The protein belongs to the universal ribosomal protein uL14 family. In terms of assembly, part of the 50S ribosomal subunit. Forms a cluster with proteins L3 and L19. In the 70S ribosome, L14 and L19 interact and together make contacts with the 16S rRNA in bridges B5 and B8.

Its function is as follows. Binds to 23S rRNA. Forms part of two intersubunit bridges in the 70S ribosome. The sequence is that of Large ribosomal subunit protein uL14 from Campylobacter jejuni subsp. jejuni serotype O:6 (strain 81116 / NCTC 11828).